A 276-amino-acid chain; its full sequence is Insulin-induced gene 1 protein (276 aa).

Disordered regions lie at residues 1–26 (MPRLDDHLWRGPCAKGTKHRSHPRAS) and 49–73 (AAHGALGTDPAHGPQSAGVGGQGSS). The Cytoplasmic segment spans residues 1–83 (MPRLDDHLWR…SHVNSWHHHL (83 aa)). A compositionally biased stretch (basic residues) spans 16–25 (GTKHRSHPRA). The helical transmembrane segment at 84–106 (VQRSLVLFSVGVVLALVLNLLQV) threads the bilayer. Over 107–125 (QRNVTLFPDEVIATIFSSA) the chain is Extracellular. A helical transmembrane segment spans residues 126–143 (WWVPPCCGTAAAVVGLLY). At 144-158 (PCIDSHLGEPHKFKR) the chain is on the cytoplasmic side. Residues lysine 155 and lysine 157 each participate in a glycyl lysine isopeptide (Lys-Gly) (interchain with G-Cter in ubiquitin) cross-link. The helical transmembrane segment at 159–181 (EWASVMRCVAVFVGINHASAKLD) threads the bilayer. The Extracellular portion of the chain corresponds to 182–184 (FAN). A helical membrane pass occupies residues 185–203 (NVQLSLTLAALSLGLWWTF). Over 204–208 (DRSRS) the chain is Cytoplasmic. Residue serine 206 is modified to Phosphoserine. The chain crosses the membrane as a helical span at residues 209 to 230 (GLGLGITIAFLATLITQLLVYN). Residues 231–244 (GVYQYTSPDFLYIR) lie on the Extracellular side of the membrane. Residues 245–262 (SWLPCIFFSGGVTVGNIG) form a helical membrane-spanning segment. The Cytoplasmic segment spans residues 263–276 (RQLAMGVPEKPHSD). A KxHxx motif is present at residues 270–276 (PEKPHSD).

The protein belongs to the INSIG family. Interacts with SCAP; interaction is direct and only takes place in the presence of sterols; it prevents interaction between SCAP and the coat protein complex II (COPII). Associates with the SCAP-SREBP complex (composed of SCAP and SREBF1/SREBP1 or SREBF2/SREBP2); association is mediated via its interaction with SCAP and only takes place in the presence of sterols. Interaction with SCAP is mutually exclusive with PAQR3. Interacts with HMGCR (via its SSD); the interaction, accelerated by sterols, leads to the recruitment of HMGCR to AMFR/gp78 for its ubiquitination by the sterol-mediated ERAD pathway. Interacts with AMFR/gp78 (via its membrane domain); the interaction recruits HMCR at the ER membrane for its ubiquitination and degradation by the sterol-mediated ERAD pathway. Interacts with SOAT2/ACAT2; leading to promote recruitment of AMFR/gp78 and subsequent ubiquitination of SOAT2/ACAT2. Interacts with RNF139. Interacts with RNF145. In terms of processing, phosphorylation at Ser-206 by PCK1 reduces binding to oxysterol, disrupting the interaction between INSIG1 and SCAP, thereby promoting nuclear translocation of SREBP proteins (SREBF1/SREBP1 or SREBF2/SREBP2) and subsequent transcription of downstream lipogenesis-related genes. Ubiquitinated by AMFR/gp78 in response to sterol deprivation, leading to its degradation: when the SCAP-SREBP complex becomes dissociated from INSIG1, INSIG1 is then ubiquitinated and degraded in proteasomes. Although ubiquitination is required for rapid INSIG1 degradation, it is not required for release of the SCAP-SREBP complex. Ubiquitinated by RNF139.

Its subcellular location is the endoplasmic reticulum membrane. Oxysterol-binding protein that mediates feedback control of cholesterol synthesis by controlling both endoplasmic reticulum to Golgi transport of SCAP and degradation of HMGCR. Acts as a negative regulator of cholesterol biosynthesis by mediating the retention of the SCAP-SREBP complex in the endoplasmic reticulum, thereby blocking the processing of sterol regulatory element-binding proteins (SREBPs) SREBF1/SREBP1 and SREBF2/SREBP2. Binds oxysterol, including 25-hydroxycholesterol, regulating interaction with SCAP and retention of the SCAP-SREBP complex in the endoplasmic reticulum. In presence of oxysterol, interacts with SCAP, retaining the SCAP-SREBP complex in the endoplasmic reticulum, thereby preventing SCAP from escorting SREBF1/SREBP1 and SREBF2/SREBP2 to the Golgi. Sterol deprivation or phosphorylation by PCK1 reduce oxysterol-binding, disrupting the interaction between INSIG1 and SCAP, thereby promoting Golgi transport of the SCAP-SREBP complex, followed by processing and nuclear translocation of SREBF1/SREBP1 and SREBF2/SREBP2. Also regulates cholesterol synthesis by regulating degradation of HMGCR: initiates the sterol-mediated ubiquitin-mediated endoplasmic reticulum-associated degradation (ERAD) of HMGCR via recruitment of the reductase to the ubiquitin ligases AMFR/gp78 and/or RNF139. Also regulates degradation of SOAT2/ACAT2 when the lipid levels are low: initiates the ubiquitin-mediated degradation of SOAT2/ACAT2 via recruitment of the ubiquitin ligases AMFR/gp78. This Bos taurus (Bovine) protein is Insulin-induced gene 1 protein.